Reading from the N-terminus, the 128-residue chain is UPF0102 protein Mext_0406 (128 aa).

The protein belongs to the UPF0102 family.

In Methylorubrum extorquens (strain PA1) (Methylobacterium extorquens), this protein is UPF0102 protein Mext_0406.